The following is a 323-amino-acid chain: Acetyl-coenzyme A carboxylase carboxyl transferase subunit alpha (323 aa).

The CoA carboxyltransferase C-terminal domain occupies 39 to 293 (RLAGKSQQLT…KRSLAESLRQ (255 aa)).

It belongs to the AccA family. Acetyl-CoA carboxylase is a heterohexamer composed of biotin carboxyl carrier protein (AccB), biotin carboxylase (AccC) and two subunits each of ACCase subunit alpha (AccA) and ACCase subunit beta (AccD).

The protein resides in the cytoplasm. The enzyme catalyses N(6)-carboxybiotinyl-L-lysyl-[protein] + acetyl-CoA = N(6)-biotinyl-L-lysyl-[protein] + malonyl-CoA. It participates in lipid metabolism; malonyl-CoA biosynthesis; malonyl-CoA from acetyl-CoA: step 1/1. In terms of biological role, component of the acetyl coenzyme A carboxylase (ACC) complex. First, biotin carboxylase catalyzes the carboxylation of biotin on its carrier protein (BCCP) and then the CO(2) group is transferred by the carboxyltransferase to acetyl-CoA to form malonyl-CoA. This Cupriavidus pinatubonensis (strain JMP 134 / LMG 1197) (Cupriavidus necator (strain JMP 134)) protein is Acetyl-coenzyme A carboxylase carboxyl transferase subunit alpha.